A 707-amino-acid chain; its full sequence is Glucose starvation modulator protein 1 (707 aa).

Positions 20–48 (CTFCHQKHLQCSNERPCKNCVKRNIADQC) form a DNA-binding region, zn(2)-C6 fungal-type. Disordered stretches follow at residues 63-122 (NSKA…PNDL), 154-188 (QPTH…PPES), 260-283 (DQQQ…GPSH), and 385-404 (NVSS…SAIA). 2 stretches are compositionally biased toward low complexity: residues 66–79 (AVAA…TTTT) and 91–104 (SPSI…ISPI). Composition is skewed to polar residues over residues 105–114 (NTSTFDTNGH) and 154–172 (QPTH…QVQP). Low complexity predominate over residues 178–188 (SSVPPSAPPES). Over residues 260–274 (DQQQSSSEATGTSAS) the composition is skewed to polar residues. The PAS domain maps to 522 to 591 (DYEKLSQLNS…FQLFKSVAVG (70 aa)). Low complexity predominate over residues 621–652 (NYNNNYNHNYSHNNNNNNNSNNSNNNGMSTGA). The tract at residues 621–659 (NYNNNYNHNYSHNNNNNNNSNNSNNNGMSTGAGNSGDGD) is disordered.

The protein belongs to the ERT1/acuK family.

The protein resides in the nucleus. Functionally, transcription factor which regulates nonfermentable carbon utilization. The sequence is that of Glucose starvation modulator protein 1 (GSM1) from Lodderomyces elongisporus (strain ATCC 11503 / CBS 2605 / JCM 1781 / NBRC 1676 / NRRL YB-4239) (Yeast).